Reading from the N-terminus, the 163-residue chain is UPF0763 protein CJJ81176_1011 (163 aa).

This sequence belongs to the UPF0763 family.

This is UPF0763 protein CJJ81176_1011 from Campylobacter jejuni subsp. jejuni serotype O:23/36 (strain 81-176).